A 57-amino-acid chain; its full sequence is MAVPKKRTSKTRTNRRRAQKKARAPQFVECPQCREKKLPHRICQSCGHYKGEEIIEV.

A disordered region spans residues 1–23 (MAVPKKRTSKTRTNRRRAQKKAR).

It belongs to the bacterial ribosomal protein bL32 family.

In Natranaerobius thermophilus (strain ATCC BAA-1301 / DSM 18059 / JW/NM-WN-LF), this protein is Large ribosomal subunit protein bL32.